Here is a 187-residue protein sequence, read N- to C-terminus: Peptidoglycan-recognition protein 2 (187 aa).

A signal peptide spans 1–19 (MKAFLVALVVAIELTLVFA). Intrachain disulfides connect Cys21-Cys144 and Cys58-Cys64. Residues 43 to 170 (KPLKYVIIHH…RTVRPTDSPG (128 aa)) enclose the N-acetylmuramoyl-L-alanine amidase domain.

Belongs to the N-acetylmuramoyl-L-alanine amidase 2 family. Localizes to plasma (at protein level).

It is found in the secreted. Peptidoglycan-recognition protein probably involved in innate immunity by binding to peptidoglycans (PGN) of bacteria and activating the prophenoloxidase (proPO) cascade immune response. Binds to 1,3-beta-D-glucan and PGN. This Holotrichia diomphalia (Korean black chafer) protein is Peptidoglycan-recognition protein 2 (PGRP-2).